A 405-amino-acid chain; its full sequence is Interferon alpha/beta receptor 1a (405 aa).

An N-terminal signal peptide occupies residues 1–20; sequence MKVGFALVLLWSLPITNVLA. Over 21-233 the chain is Extracellular; it reads ELPQPQNLTL…QTEGDTPYGQ (213 aa). 2 consecutive Fibronectin type-III domains span residues 22-123 and 126-228; these read LPQP…IDAS and PPSR…TEGD. N-linked (GlcNAc...) asparagine glycans are attached at residues N27 and N70. Disulfide bonds link C75-C83 and C201-C222. An N-linked (GlcNAc...) asparagine glycan is attached at N212. Residues 234 to 254 traverse the membrane as a helical segment; it reads IFLYFLVSMMVCFLLVLLSSY. Residues 255-405 are Cytoplasmic-facing; the sequence is AFFRFYRGLK…LDEGVVDICV (151 aa). Positions 325–374 are disordered; the sequence is TAPPSELEQDSGRRIRQDSGDSGIYSTEGGSAQQGRSGGEPIRRDQEVDS. Residues 334 to 343 are compositionally biased toward basic and acidic residues; that stretch reads DSGRRIRQDS. Residues 348–359 are compositionally biased toward polar residues; that stretch reads IYSTEGGSAQQG.

This sequence belongs to the type II cytokine receptor family. As to quaternary structure, heterodimer with IFNAR2; forming the receptor for type I interferon.

It is found in the cell membrane. Functionally, together with IFNAR2, forms the heterodimeric receptor for type I interferons (including interferons alpha, beta, epsilon, omega and kappa). Type I interferon binding activates the JAK-STAT signaling cascade, resulting in transcriptional activation or repression of interferon-regulated genes that encode the effectors of the interferon response. Mechanistically, type I interferon-binding brings the IFNAR1 and IFNAR2 subunits into close proximity with one another, driving their associated Janus kinases (JAKs) (TYK2 bound to IFNAR1 and JAK1 bound to IFNAR2) to cross-phosphorylate one another. The activated kinases phosphorylate specific tyrosine residues on the intracellular domains of IFNAR1 and IFNAR2, forming docking sites for the STAT transcription factors. STAT proteins are then phosphorylated by the JAKs, promoting their translocation into the nucleus to regulate expression of interferon-regulated genes. The protein is Interferon alpha/beta receptor 1a of Oncorhynchus mykiss (Rainbow trout).